Here is a 457-residue protein sequence, read N- to C-terminus: ATP synthase subunit beta (457 aa).

147–154 contacts ATP; sequence GGAGVGKT.

It belongs to the ATPase alpha/beta chains family. F-type ATPases have 2 components, CF(1) - the catalytic core - and CF(0) - the membrane proton channel. CF(1) has five subunits: alpha(3), beta(3), gamma(1), delta(1), epsilon(1). CF(0) has three main subunits: a(1), b(2) and c(9-12). The alpha and beta chains form an alternating ring which encloses part of the gamma chain. CF(1) is attached to CF(0) by a central stalk formed by the gamma and epsilon chains, while a peripheral stalk is formed by the delta and b chains.

Its subcellular location is the cell inner membrane. The enzyme catalyses ATP + H2O + 4 H(+)(in) = ADP + phosphate + 5 H(+)(out). In terms of biological role, produces ATP from ADP in the presence of a proton gradient across the membrane. The catalytic sites are hosted primarily by the beta subunits. The chain is ATP synthase subunit beta from Histophilus somni (strain 129Pt) (Haemophilus somnus).